A 508-amino-acid chain; its full sequence is Aldehyde dehydrogenase family 7 member A1 (508 aa).

Residue 244–249 (GSSKVG) coordinates NAD(+). Glu-266 (proton acceptor) is an active-site residue. Cys-300 functions as the Nucleophile in the catalytic mechanism.

This sequence belongs to the aldehyde dehydrogenase family. In terms of assembly, homotetramer.

The enzyme catalyses an aldehyde + NAD(+) + H2O = a carboxylate + NADH + 2 H(+). In terms of biological role, may play a role in fruit development. The polypeptide is Aldehyde dehydrogenase family 7 member A1 (Malus domestica (Apple)).